Consider the following 306-residue polypeptide: Galactosylgalactosylxylosylprotein 3-beta-glucuronosyltransferase I (306 aa).

Over 1–11 (MSEVRIRPRQV) the chain is Cytoplasmic. The chain crosses the membrane as a helical; Signal-anchor for type II membrane protein span at residues 12-29 (LILIIVFLVVLMMVHRNG). The Lumenal portion of the chain corresponds to 30-306 (KRTCQGPEYL…GQRSDGGMEV (277 aa)). An N-linked (GlcNAc...) asparagine glycan is attached at Asn90. Position 163 (Asp163) interacts with Mn(2+). Glu252 serves as the catalytic Proton acceptor.

It belongs to the glycosyltransferase 43 family. It depends on Mn(2+) as a cofactor.

The protein localises to the golgi apparatus membrane. The enzyme catalyses 3-O-(beta-D-galactosyl-(1-&gt;3)-beta-D-galactosyl-(1-&gt;4)-beta-D-xylosyl)-L-seryl-[protein] + UDP-alpha-D-glucuronate = 3-O-(beta-D-GlcA-(1-&gt;3)-beta-D-Gal-(1-&gt;3)-beta-D-Gal-(1-&gt;4)-beta-D-Xyl)-L-seryl-[protein] + UDP + H(+). The protein operates within protein modification; protein glycosylation. Involved in the biosynthesis of L2/HNK-1 carbohydrate epitope on both glycolipids and glycoproteins. Shows strict specificity for Gal-beta-1,3-Gal-beta-1,4-Xyl, exhibiting negligible incorporation into other galactoside substrates. This is Galactosylgalactosylxylosylprotein 3-beta-glucuronosyltransferase I (GlcAT-I) from Drosophila melanogaster (Fruit fly).